Consider the following 437-residue polypeptide: Vitellogenin-1 (437 aa).

Residues 1 to 19 (MNPLKIFCFLALVIAVASA) form the signal peptide. 2 disordered regions span residues 161–194 (QQQP…ESWK) and 405–437 (PKSP…QNQE). 2 stretches are compositionally biased toward polar residues: residues 174–184 (GSSQGNQGATS) and 427–437 (SWKSGKNQNQE).

Belongs to the AB hydrolase superfamily. Lipase family. Synthesized in the fat body and ovarian follicle cells and accumulate in the oocyte.

The protein localises to the secreted. In terms of biological role, vitellogenin is the major yolk protein of eggs where it is used as a food source during embryogenesis. The polypeptide is Vitellogenin-1 (VG1-GAMMA) (Ceratitis capitata (Mediterranean fruit fly)).